A 300-amino-acid chain; its full sequence is B1 kinase (300 aa).

The Protein kinase domain occupies Trp16–Phe282. ATP is bound by residues Ile22–Ile30 and Lys45. Asp147 serves as the catalytic Proton acceptor.

This sequence belongs to the protein kinase superfamily. Ser/Thr protein kinase family. Poxviruses subfamily. Interacts with host JIP1; this interaction increases the amount of MAPK bound to JIP1 and subsequently increases the activity of transcription factors, such as JUN, that respond to these complexes. Interacts with protein OPG198; this interaction inhibits the repressive activity of OPG198 pseudokinase on viral replication factory formation. The cofactor is Mg(2+). Post-translationally, autophosphorylated.

The protein localises to the virion. It is found in the host cytoplasm. The catalysed reaction is L-seryl-[protein] + ATP = O-phospho-L-seryl-[protein] + ADP + H(+). The enzyme catalyses L-threonyl-[protein] + ATP = O-phospho-L-threonyl-[protein] + ADP + H(+). Essential serine/threonine-protein kinase that plays different role in the viral life cycle. Phosphorylates the host small ribosomal protein RACK1 thereby customizing the ribosomes to a state optimal for viral mRNAs (which contain poly-A leaders) but not for host mRNAs. Facilitates viral DNA replication by inhibiting host BANF1, a cellular host defense responsive to foreign DNA. Phosphorylates host BANF1 on serine and threonine residues; this leads to BANF1 relocalization to the cytoplasm, loss of dimerization and impaired DNA binding activity. Indeed, BANF1 activity depends on its DNA-binding property which is blocked by VPK1-mediated phosphorylation. Required for viral intermediate genes expression, probably by inhibiting host BANF1. Modulates cellular responses via host JUN by two different mechanisms, either by direct phosphorylation or by modulation of upstream JIP1-MAPK complexes. Seems to participate in the accumulation/processing of late proteins and thus in virion maturation. In addition, inhibits B12 repressive activity on viral DNA replication via a phosphorylation-dependent mechanism. The sequence is that of B1 kinase (OPG187) from Bos taurus (Bovine).